The sequence spans 505 residues: ATP synthase subunit alpha (505 aa).

170 to 177 (GDRQTGKS) is a binding site for ATP.

This sequence belongs to the ATPase alpha/beta chains family. F-type ATPases have 2 components, CF(1) - the catalytic core - and CF(0) - the membrane proton channel. CF(1) has five subunits: alpha(3), beta(3), gamma(1), delta(1), epsilon(1). CF(0) has four main subunits: a(1), b(1), b'(1) and c(9-12).

Its subcellular location is the cellular thylakoid membrane. The enzyme catalyses ATP + H2O + 4 H(+)(in) = ADP + phosphate + 5 H(+)(out). Its function is as follows. Produces ATP from ADP in the presence of a proton gradient across the membrane. The alpha chain is a regulatory subunit. In Prochlorococcus marinus (strain MIT 9215), this protein is ATP synthase subunit alpha.